A 362-amino-acid polypeptide reads, in one-letter code: Putative glutamate--cysteine ligase 2-1 (362 aa).

It belongs to the glutamate--cysteine ligase type 2 family. YbdK subfamily.

The enzyme catalyses L-cysteine + L-glutamate + ATP = gamma-L-glutamyl-L-cysteine + ADP + phosphate + H(+). Functionally, ATP-dependent carboxylate-amine ligase which exhibits weak glutamate--cysteine ligase activity. This Streptomyces avermitilis (strain ATCC 31267 / DSM 46492 / JCM 5070 / NBRC 14893 / NCIMB 12804 / NRRL 8165 / MA-4680) protein is Putative glutamate--cysteine ligase 2-1.